The sequence spans 371 residues: Chaperone protein DnaJ (371 aa).

A J domain is found at 5-69 (DYYEVLGLSK…QKRAQYDQFG (65 aa)). The CR-type zinc finger occupies 133 to 215 (GKELNVEIPV…CHGSGKVRKR (83 aa)). Zn(2+)-binding residues include Cys-146, Cys-149, Cys-163, Cys-166, Cys-189, Cys-192, Cys-203, and Cys-206. CXXCXGXG motif repeat units lie at residues 146 to 153 (CDTCKGSG), 163 to 170 (CKHCSGSG), 189 to 196 (CGHCSGTG), and 203 to 210 (CTTCHGSG).

Belongs to the DnaJ family. As to quaternary structure, homodimer. The cofactor is Zn(2+).

Its subcellular location is the cytoplasm. Participates actively in the response to hyperosmotic and heat shock by preventing the aggregation of stress-denatured proteins and by disaggregating proteins, also in an autonomous, DnaK-independent fashion. Unfolded proteins bind initially to DnaJ; upon interaction with the DnaJ-bound protein, DnaK hydrolyzes its bound ATP, resulting in the formation of a stable complex. GrpE releases ADP from DnaK; ATP binding to DnaK triggers the release of the substrate protein, thus completing the reaction cycle. Several rounds of ATP-dependent interactions between DnaJ, DnaK and GrpE are required for fully efficient folding. Also involved, together with DnaK and GrpE, in the DNA replication of plasmids through activation of initiation proteins. This is Chaperone protein DnaJ from Bacillus cereus (strain G9842).